Reading from the N-terminus, the 197-residue chain is UPF0462 protein C4orf33 homolog (197 aa).

Belongs to the UPF0462 family.

The protein is UPF0462 protein C4orf33 homolog of Danio rerio (Zebrafish).